The chain runs to 295 residues: Pyridoxal 5'-phosphate synthase subunit PdxS (295 aa).

Asp-25 serves as a coordination point for D-ribose 5-phosphate. Lys-82 functions as the Schiff-base intermediate with D-ribose 5-phosphate in the catalytic mechanism. D-ribose 5-phosphate is bound at residue Gly-154. Arg-166 is a binding site for D-glyceraldehyde 3-phosphate. Residues Gly-215 and Gly-236–Ser-237 each bind D-ribose 5-phosphate.

Belongs to the PdxS/SNZ family. As to quaternary structure, in the presence of PdxT, forms a dodecamer of heterodimers.

The catalysed reaction is aldehydo-D-ribose 5-phosphate + D-glyceraldehyde 3-phosphate + L-glutamine = pyridoxal 5'-phosphate + L-glutamate + phosphate + 3 H2O + H(+). It functions in the pathway cofactor biosynthesis; pyridoxal 5'-phosphate biosynthesis. Catalyzes the formation of pyridoxal 5'-phosphate from ribose 5-phosphate (RBP), glyceraldehyde 3-phosphate (G3P) and ammonia. The ammonia is provided by the PdxT subunit. Can also use ribulose 5-phosphate and dihydroxyacetone phosphate as substrates, resulting from enzyme-catalyzed isomerization of RBP and G3P, respectively. This chain is Pyridoxal 5'-phosphate synthase subunit PdxS, found in Oceanobacillus iheyensis (strain DSM 14371 / CIP 107618 / JCM 11309 / KCTC 3954 / HTE831).